Here is a 61-residue protein sequence, read N- to C-terminus: Metallothionein-1L (61 aa).

The tract at residues 1–29 (MDPNCSCATGGSCSCASSCKCKECKCTSC) is beta. Residues C5, C7, C13, C15, C19, C21, C24, C26, C29, C33, C34, C36, C37, C41, C44, C48, C50, C57, C59, and C60 each contribute to the a divalent metal cation site. The segment at 30–61 (KKSCCSCCPMGCAKCAQGCVCKGASEKCSCCA) is alpha.

The protein belongs to the metallothionein superfamily. Type 1 family. In terms of assembly, monomer. As to expression, expressed in reticulocytes.

Metallothioneins have a high content of cysteine residues that bind various heavy metals; these proteins are transcriptionally regulated by both heavy metals and glucocorticoids. This Homo sapiens (Human) protein is Metallothionein-1L (MT1L).